Consider the following 201-residue polypeptide: Probable chemoreceptor glutamine deamidase CheD 2 (201 aa).

The protein belongs to the CheD family.

It carries out the reaction L-glutaminyl-[protein] + H2O = L-glutamyl-[protein] + NH4(+). Its function is as follows. Probably deamidates glutamine residues to glutamate on methyl-accepting chemotaxis receptors (MCPs), playing an important role in chemotaxis. The chain is Probable chemoreceptor glutamine deamidase CheD 2 from Chromobacterium violaceum (strain ATCC 12472 / DSM 30191 / JCM 1249 / CCUG 213 / NBRC 12614 / NCIMB 9131 / NCTC 9757 / MK).